A 50-amino-acid polypeptide reads, in one-letter code: Disintegrin pyramidin-A (50 aa).

Residues 1–47 (DCASGPCCRDCKFLKEGTICKRARGDNMDDYCNGKTCDCPRNPHKGE) form the Disintegrin domain. Disulfide bonds link C2–C11, C7–C32, C8–C37, and C20–C39. The short motif at 24-26 (RGD) is the Cell attachment site element.

Belongs to the venom metalloproteinase (M12B) family. P-II subfamily. P-IIa sub-subfamily. As to quaternary structure, monomer (disintegrin). As to expression, expressed by the venom gland.

The protein localises to the secreted. In terms of biological role, inhibits ADP-induced human platelet aggregation. This Echis pyramidum leakeyi (Leakey's carpet viper) protein is Disintegrin pyramidin-A.